The following is a 516-amino-acid chain: BAR/IMD domain-containing adapter protein 2-like 1 (516 aa).

The IMD domain maps to 1 to 249 (MSRGPEEVNR…MNMIEEIKTP (249 aa)). Positions 115-148 (MNATLKRYQAEHRNKLDSLEKSQAELKKIRRKSQ) form a coiled coil. Residues T248 and T257 each carry the phosphothreonine modification. S261 and S281 each carry phosphoserine. The segment at 303–328 (NPATAGQSAEKTNNSTANTGDDPSLQ) is disordered. At S332 the chain carries Phosphoserine. The SH3 domain occupies 340-403 (MKKQKVKTIF…PSSYTKLLEE (64 aa)). T413 carries the phosphothreonine modification. 3 positions are modified to phosphoserine: S415, S421, and S423. The tract at residues 454 to 516 (ADAAKIPSTS…TNDRSAPIIR (63 aa)) is disordered. The span at 474-485 (ATSTSPSDSNGT) shows a compositional bias: polar residues. Positions 488–516 (PPFLSGENPFATVKLRPTVTNDRSAPIIR) are binds F-actin.

In terms of assembly, interacts with RAC1. Binds to F-actin. Interacts with FASLG. Phosphorylated on tyrosine in response to insulin.

The protein resides in the cytoplasm. Its subcellular location is the cytoskeleton. Its function is as follows. May function as adapter protein. Involved in the formation of clusters of actin bundles. Plays a role in the reorganization of the actin cytoskeleton in response to bacterial infection. This Rattus norvegicus (Rat) protein is BAR/IMD domain-containing adapter protein 2-like 1 (Baiap2l1).